Consider the following 433-residue polypeptide: Evolutionarily conserved signaling intermediate in Toll pathway, mitochondrial (433 aa).

A mitochondrion-targeting transit peptide spans 1–48 (MSWAQAILLARGASRGWGGICSTALTGAPFSQVPPQAPRGLRCSAAAH). The disordered stretch occupies residues 36–63 (QAPRGLRCSAAAHNPDSSLVPHPPEPPR). A Glycyl lysine isopeptide (Lys-Gly) (interchain with G-Cter in ubiquitin) cross-link involves residue lysine 372. A disordered region spans residues 397–433 (SGELLPSSSELEEPPPPPPEGQEEEEDSQQRQQQGQS).

This sequence belongs to the ECSIT family. In terms of assembly, interacts with MAP3K1, SMAD4 and TRAF6. Interacts with SMAD1 only after BMP4-treatment. Part of the mitochondrial complex I assembly/MCIA complex that comprises at least the core subunits TMEM126B, NDUFAF1, ECSIT and ACAD9 and complement subunits such as COA1 and TMEM186. Interacts with NDUFAF1. Interacts with ACAD9. Interacts with TRIM59. Interacts with TMEM70 and TMEM242. Interacts (when ubiquitinated) with NF-kappa-B subunits RELA and NFKB1. Interacts with RIGI, IFIT1 and MAVS; these interactions promote RLR-mediated type I IFN induction. Interacts with SQSTM1; this interaction inhibits TLR4 signaling via functional regulation of the TRAF6-ECSIT complex. Interacts with cereblon/CRBN; this interaction inhibits the ubiquitination of ECSIT. In terms of processing, ubiquitinated on Lys-372; leading to translocation in the nucleus together with RELA and NFKB1 and expression of NF-kappa-B-dependent genes.

Its subcellular location is the cytoplasm. It is found in the nucleus. It localises to the mitochondrion. Functionally, adapter protein that plays a role in different signaling pathways including TLRs and IL-1 pathways or innate antiviral induction signaling. Plays a role in the activation of NF-kappa-B by forming a signal complex with TRAF6 and TAK1/MAP3K7 to activate TAK1/MAP3K7 leading to activation of IKKs. Once ubiquitinated, interacts with the dissociated RELA and NFKB1 proteins and translocates to the nucleus where it induces NF-kappa-B-dependent gene expression. Plays a role in innate antiviral immune response by bridging the pattern recognition receptors RIGI and MDA5/IFIT1 to the MAVS complex at the mitochondrion. Promotes proteolytic activation of MAP3K1. Involved in the BMP signaling pathway. Required for normal embryonic development. Its function is as follows. As part of the MCIA complex, involved in the assembly of the mitochondrial complex I. The sequence is that of Evolutionarily conserved signaling intermediate in Toll pathway, mitochondrial from Bos taurus (Bovine).